A 273-amino-acid chain; its full sequence is 3-keto-5-aminohexanoate cleavage enzyme (273 aa).

Glu14 lines the (5S)-5-amino-3-oxohexanoate pocket. Residues His46 and His48 each coordinate Zn(2+). Residues Ser82, Gly85, and Ser106 each coordinate (5S)-5-amino-3-oxohexanoate. Glu227 provides a ligand contact to Zn(2+).

The protein belongs to the BKACE family. Kce subfamily. As to quaternary structure, homotetramer. It depends on Zn(2+) as a cofactor.

It catalyses the reaction (5S)-5-amino-3-oxohexanoate + acetyl-CoA = (3S)-3-aminobutanoyl-CoA + acetoacetate. It participates in amino-acid degradation; L-lysine degradation via acetate pathway. Its function is as follows. Involved in the anaerobic fermentation of lysine. Catalyzes the reversible reaction between 3-keto-5-aminohexanoate (KAH) and acetyl-CoA to form 3-aminobutyryl-CoA and acetoacetate. The reaction involves the deprotonation of KAH, the nucleophilic addition onto acetyl-CoA and the intramolecular transfer of the CoA moiety. The chain is 3-keto-5-aminohexanoate cleavage enzyme from Acetoanaerobium sticklandii (strain ATCC 12662 / DSM 519 / JCM 1433 / CCUG 9281 / NCIMB 10654 / HF) (Clostridium sticklandii).